We begin with the raw amino-acid sequence, 36 residues long: Conotoxin Cl14.10 (36 aa).

Positions 1–2 (NE) are excised as a propeptide.

Contains 2 disulfide bond. Expressed by the venom duct.

The protein localises to the secreted. In Californiconus californicus (California cone), this protein is Conotoxin Cl14.10.